Reading from the N-terminus, the 333-residue chain is Tetraacyldisaccharide 4'-kinase (333 aa).

55–62 (TAGGNGKT) contacts ATP.

This sequence belongs to the LpxK family.

It carries out the reaction a lipid A disaccharide + ATP = a lipid IVA + ADP + H(+). It participates in glycolipid biosynthesis; lipid IV(A) biosynthesis; lipid IV(A) from (3R)-3-hydroxytetradecanoyl-[acyl-carrier-protein] and UDP-N-acetyl-alpha-D-glucosamine: step 6/6. Transfers the gamma-phosphate of ATP to the 4'-position of a tetraacyldisaccharide 1-phosphate intermediate (termed DS-1-P) to form tetraacyldisaccharide 1,4'-bis-phosphate (lipid IVA). The polypeptide is Tetraacyldisaccharide 4'-kinase (Proteus mirabilis (strain HI4320)).